The primary structure comprises 213 residues: Uridine kinase (213 aa).

Residue 15 to 22 (GASASGKS) participates in ATP binding.

It belongs to the uridine kinase family.

The protein resides in the cytoplasm. It catalyses the reaction uridine + ATP = UMP + ADP + H(+). The enzyme catalyses cytidine + ATP = CMP + ADP + H(+). It functions in the pathway pyrimidine metabolism; CTP biosynthesis via salvage pathway; CTP from cytidine: step 1/3. It participates in pyrimidine metabolism; UMP biosynthesis via salvage pathway; UMP from uridine: step 1/1. The protein is Uridine kinase of Serratia proteamaculans (strain 568).